The following is a 210-amino-acid chain: V-type sodium ATPase subunit D (210 aa).

Belongs to the V-ATPase D subunit family.

Functionally, involved in ATP-driven sodium extrusion. This Enterococcus hirae (strain ATCC 9790 / DSM 20160 / JCM 8729 / LMG 6399 / NBRC 3181 / NCIMB 6459 / NCDO 1258 / NCTC 12367 / WDCM 00089 / R) protein is V-type sodium ATPase subunit D (ntpD).